Reading from the N-terminus, the 420-residue chain is MEFPEHGVRLLGRLRQQRELGFLCDCTVLVGDARFPAHRAVLAACSVYFHLFYRDQPASSRDTVRLNGDIVTVPAFSRLLDFMYEGRLDLHSLPVEDVLAAASYLHMYDIVKVCKGRLRKKDPDLETRTLGTELPGQTPHPLPSWPPAFCQATPKAKPPSLGVKAVHPLPKFGPPSWQVSEESSGALDLSLKPGPRPEQAHPPCLLQTSQCSSIQQGAQPLVKAEQDSFSEQDSSSPQSADRSPPPVCASAARGLAVNLEPLHIQGTGSQQLGLHAEPVVDSEDLGPGRHLCICPLCCKLFPSTHALQPHLSAHFRERDSVRTRLSPEGAVPTCPLCSKTFSCTYTLKRHERTHSGEKPYTCVQCGKSFQYSHNLSRHAVVHTREKPHACRWCERRFTQSGDLYRHVRKFHYGLVKPLLV.

The 69-residue stretch at 24-92 (CDCTVLVGDA…MYEGRLDLHS (69 aa)) folds into the BTB domain. Disordered stretches follow at residues 174-204 (PPSWQVSEESSGALDLSLKPGPRPEQAHPPC) and 216-248 (QGAQPLVKAEQDSFSEQDSSSPQSADRSPPPVC). Over residues 227–241 (DSFSEQDSSSPQSAD) the composition is skewed to low complexity. 4 consecutive C2H2-type zinc fingers follow at residues 292–314 (CICPLCCKLFPSTHALQPHLSAH), 332–354 (PTCPLCSKTFSCTYTLKRHERTH), 360–382 (YTCVQCGKSFQYSHNLSRHAVVH), and 388–411 (HACRWCERRFTQSGDLYRHVRKFH).

The protein belongs to the krueppel C2H2-type zinc-finger protein family. ZBTB18 subfamily.

It localises to the cytoplasm. It is found in the nucleus. The protein resides in the nucleoplasm. Functionally, transcriptional repressor. Specifically binds DNA and probably acts by recruiting chromatin remodeling multiprotein complexes. This is Zinc finger and BTB domain-containing protein 42 (Zbtb42) from Rattus norvegicus (Rat).